The chain runs to 505 residues: AMP phosphorylase (505 aa).

AMP-binding positions include Gly170, 196–201 (SRAITS), and Thr205. Catalysis depends on Asp258, which acts as the Proton donor. 2 residues coordinate AMP: Ser266 and Lys290.

The protein belongs to the thymidine/pyrimidine-nucleoside phosphorylase family. Type 2 subfamily.

It carries out the reaction AMP + phosphate = alpha-D-ribose 1,5-bisphosphate + adenine. The enzyme catalyses CMP + phosphate = cytosine + alpha-D-ribose 1,5-bisphosphate. It catalyses the reaction UMP + phosphate = alpha-D-ribose 1,5-bisphosphate + uracil. Its function is as follows. Catalyzes the conversion of AMP and phosphate to adenine and ribose 1,5-bisphosphate (R15P). Exhibits phosphorylase activity toward CMP and UMP in addition to AMP. Functions in an archaeal AMP degradation pathway, together with R15P isomerase and RubisCO. This is AMP phosphorylase from Methanococcus vannielii (strain ATCC 35089 / DSM 1224 / JCM 13029 / OCM 148 / SB).